Consider the following 161-residue polypeptide: Large ribosomal subunit protein uL15 (161 aa).

Positions 1–41 (MTKLNELAPAPGSTKGRMRVGRGPGSGKGKTAGRGVKGQKA) are disordered. The span at 22-36 (RGPGSGKGKTAGRGV) shows a compositional bias: gly residues.

This sequence belongs to the universal ribosomal protein uL15 family. In terms of assembly, part of the 50S ribosomal subunit.

In terms of biological role, binds to the 23S rRNA. This Caulobacter sp. (strain K31) protein is Large ribosomal subunit protein uL15.